We begin with the raw amino-acid sequence, 126 residues long: Aspartate 1-decarboxylase (126 aa).

Catalysis depends on S25, which acts as the Schiff-base intermediate with substrate; via pyruvic acid. At S25 the chain carries Pyruvic acid (Ser). T57 is a substrate binding site. Catalysis depends on Y58, which acts as the Proton donor. Residue 73-75 (GAA) coordinates substrate.

It belongs to the PanD family. As to quaternary structure, heterooctamer of four alpha and four beta subunits. The cofactor is pyruvate. Post-translationally, is synthesized initially as an inactive proenzyme, which is activated by self-cleavage at a specific serine bond to produce a beta-subunit with a hydroxyl group at its C-terminus and an alpha-subunit with a pyruvoyl group at its N-terminus.

The protein resides in the cytoplasm. It carries out the reaction L-aspartate + H(+) = beta-alanine + CO2. It participates in cofactor biosynthesis; (R)-pantothenate biosynthesis; beta-alanine from L-aspartate: step 1/1. Its function is as follows. Catalyzes the pyruvoyl-dependent decarboxylation of aspartate to produce beta-alanine. The chain is Aspartate 1-decarboxylase from Tolumonas auensis (strain DSM 9187 / NBRC 110442 / TA 4).